We begin with the raw amino-acid sequence, 292 residues long: Ribosomal protein L11 methyltransferase (292 aa).

Residues Thr136, Gly159, Asp181, and Asn228 each contribute to the S-adenosyl-L-methionine site.

The protein belongs to the methyltransferase superfamily. PrmA family.

The protein resides in the cytoplasm. The enzyme catalyses L-lysyl-[protein] + 3 S-adenosyl-L-methionine = N(6),N(6),N(6)-trimethyl-L-lysyl-[protein] + 3 S-adenosyl-L-homocysteine + 3 H(+). Functionally, methylates ribosomal protein L11. This chain is Ribosomal protein L11 methyltransferase, found in Rhizobium rhizogenes (strain K84 / ATCC BAA-868) (Agrobacterium radiobacter).